Consider the following 523-residue polypeptide: NADP-specific glutamate dehydrogenase (523 aa).

Positions C26 to A50 are disordered. K202 is an active-site residue.

Belongs to the Glu/Leu/Phe/Val dehydrogenases family. In terms of assembly, homo- and heterohexamer of alpha and beta subunits. Both subunits are encoded by the same gene. The N-termini of the alpha and the beta chains are blocked.

It is found in the plastid. The protein resides in the chloroplast. The enzyme catalyses L-glutamate + NADP(+) + H2O = 2-oxoglutarate + NH4(+) + NADPH + H(+). The sequence is that of NADP-specific glutamate dehydrogenase from Chlorella sorokiniana (Freshwater green alga).